A 411-amino-acid chain; its full sequence is Lissencephaly-1 homolog (411 aa).

The LisH domain maps to 9 to 41; the sequence is QREELNQAIADYLGSNGYADSLETFRKEADLST. The stretch at 56–83 forms a coiled coil; the sequence is TSVIRLQKKVMDLEAKLTEAEKEVIEGA. WD repeat units follow at residues 106 to 147, 148 to 187, 191 to 230, 233 to 272, 275 to 334, 337 to 376, and 379 to 411; these read GHRA…RSLK, GHTDSVQDVAFDAQGKLLASCSADLSIKLWDFQQSYECVK, GHDHNVSSVAFVPAGDYVLSASRDRTIKMWEVATGYCVKT, GHREWVRMVRVHIEGSIFATCSNDHTIRVWLTNSKDCKVE, DHEH…CLLT, GHDNWVRGLAFHPGGKYLVSASDDKTIRVWDLRNKRCMKT, and AHQHFCTSIDFHKAHPYVISGSVDQSVKVWECR.

Belongs to the WD repeat LIS1/nudF family.

It localises to the cytoplasm. It is found in the cytoskeleton. The protein resides in the microtubule organizing center. The protein localises to the centrosome. Functionally, positively regulates the activity of the minus-end directed microtubule motor protein dynein. May enhance dynein-mediated microtubule sliding by targeting dynein to the microtubule plus end. Required for several dynein- and microtubule-dependent processes. This is Lissencephaly-1 homolog from Drosophila mojavensis (Fruit fly).